Consider the following 286-residue polypeptide: MKSEVVVRINENFKKLSRIVSEKGISTVCEEALCPNIMECWGSGTATFMIMGDICTRGCRFCYVKKGKPVLLDHEEPIKVAEAVREMGLDYVVITSVDRDDLADGGASHFSQVVKAVKEMNPDVIVEVLTPDFMGNKELVEKVIGSGVDVFAHNVETVRSLTPLVRDARASYEQSLRVLSYAKNVVKKSSILLGLGESLEEVVETMKDLRNVGVDILVLSQYMRPSIKQLEVKKRYNMEEYKELEKIAYSLGFSYVVALPHARTSYRAKEAYLRAMANVKNNNRWS.

7 residues coordinate [4Fe-4S] cluster: cysteine 29, cysteine 34, cysteine 40, cysteine 55, cysteine 59, cysteine 62, and serine 265. In terms of domain architecture, Radical SAM core spans 41 to 254 (WGSGTATFMI…EKIAYSLGFS (214 aa)).

The protein belongs to the radical SAM superfamily. Lipoyl synthase family. Requires [4Fe-4S] cluster as cofactor.

Its subcellular location is the cytoplasm. It catalyses the reaction [[Fe-S] cluster scaffold protein carrying a second [4Fe-4S](2+) cluster] + N(6)-octanoyl-L-lysyl-[protein] + 2 oxidized [2Fe-2S]-[ferredoxin] + 2 S-adenosyl-L-methionine + 4 H(+) = [[Fe-S] cluster scaffold protein] + N(6)-[(R)-dihydrolipoyl]-L-lysyl-[protein] + 4 Fe(3+) + 2 hydrogen sulfide + 2 5'-deoxyadenosine + 2 L-methionine + 2 reduced [2Fe-2S]-[ferredoxin]. It functions in the pathway protein modification; protein lipoylation via endogenous pathway; protein N(6)-(lipoyl)lysine from octanoyl-[acyl-carrier-protein]: step 2/2. Functionally, catalyzes the radical-mediated insertion of two sulfur atoms into the C-6 and C-8 positions of the octanoyl moiety bound to the lipoyl domains of lipoate-dependent enzymes, thereby converting the octanoylated domains into lipoylated derivatives. The polypeptide is Lipoyl synthase (Sulfolobus acidocaldarius (strain ATCC 33909 / DSM 639 / JCM 8929 / NBRC 15157 / NCIMB 11770)).